The primary structure comprises 3092 residues: Probable polyketide synthase 45 (3092 aa).

A Ketosynthase family 3 (KS3) domain is found at 10 to 430 (DNDVAIIGIG…GSNVCLILTE (421 aa)). Active-site for beta-ketoacyl synthase activity residues include C170, H315, and H353. Positions 640 to 673 (GILASISIGHSLGEVSSAVCSGMIDLETGCFIIY) are acyl/malonyl transferase. S650 functions as the For acyl/malonyl transferase activity in the catalytic mechanism. The interval 967-1087 (INQLGNRNER…GKFSITKHND (121 aa)) is N-terminal hotdog fold. One can recognise a PKS/mFAS DH domain in the interval 967–1254 (INQLGNRNER…YTQLTPYKNQ (288 aa)). The active-site Proton acceptor; for dehydratase activity is H999. Positions 1103-1254 (NFVTIQKKEL…YTQLTPYKNQ (152 aa)) are C-terminal hotdog fold. Residue D1165 is the Proton donor; for dehydratase activity of the active site. Residues 2566-2644 (SDDLSIREEI…QLIQSVTDAM (79 aa)) form the Carrier domain. S2604 is modified (O-(pantetheine 4'-phosphoryl)serine). The chain crosses the membrane as a helical span at residues 2705–2725 (NTVFLTGSSGFIGIYILFYLI).

It depends on pantetheine 4'-phosphate as a cofactor.

Its subcellular location is the membrane. Functionally, probable polyketide synthase. This is Probable polyketide synthase 45 (pks45) from Dictyostelium discoideum (Social amoeba).